Consider the following 766-residue polypeptide: Serine/threonine-protein kinase PLK4 (766 aa).

A Protein kinase domain is found at 14 to 267 (YEVQHLLGKG…LEAVLCHPFM (254 aa)). ATP-binding positions include 20–28 (LGKGGFAIV) and lysine 43. The Proton acceptor role is filled by aspartate 138. The Cryptic POLO box 1 (CPB1) domain occupies 379–496 (EDRISVPPLN…ARFVGLVKSK (118 aa)). The Cryptic POLO box 2 (CPB2) domain maps to 497 to 600 (TPKVTYFSTL…GRRPVTDVQP (104 aa)). Residues 658–737 (PIKRINVPDV…IPNIQIKLKT (80 aa)) enclose the POLO box domain.

The protein belongs to the protein kinase superfamily. Ser/Thr protein kinase family. CDC5/Polo subfamily. As to quaternary structure, homodimer. In terms of processing, ubiquitinated by the SCF(Slimb) ubiquitin ligase complex; leading to its degradation by the proteasome during interphase and regulating centriole number and ensuring the block to centriole reduplication.

The protein localises to the cytoplasm. It localises to the cytoskeleton. Its subcellular location is the microtubule organizing center. The protein resides in the centrosome. It is found in the centriole. The catalysed reaction is L-seryl-[protein] + ATP = O-phospho-L-seryl-[protein] + ADP + H(+). It carries out the reaction L-threonyl-[protein] + ATP = O-phospho-L-threonyl-[protein] + ADP + H(+). Functionally, serine/threonine-protein kinase that plays a central role in centriole duplication. Able to trigger procentriole formation on the surface of the mother centriole cylinder, using mother centriole as a platform, leading to the recruitment of centriole biogenesis proteins such as sas-6. When overexpressed, it is able to induce centrosome amplification through the simultaneous generation of multiple procentrioles adjoining each parental centriole during S phase. Centrosome amplification following overexpression can initiate tumorigenesis, highlighting the importance of centrosome regulation in cancers. This is Serine/threonine-protein kinase PLK4 (SAK) from Drosophila yakuba (Fruit fly).